A 130-amino-acid polypeptide reads, in one-letter code: Gonadotropin subunit beta-1 (130 aa).

Positions 1 to 18 (MRMHFVVMVMLLPALMMA) are cleaved as a signal peptide. 5 cysteine pairs are disulfide-bonded: Cys26/Cys74, Cys40/Cys89, Cys51/Cys105, Cys55/Cys107, and Cys110/Cys117. The N-linked (GlcNAc...) asparagine glycan is linked to Asn30.

The protein belongs to the glycoprotein hormones subunit beta family. Heterodimer of an alpha and a beta chain.

The protein localises to the secreted. Functionally, involved in gametogenesis and steroidogenesis. This Cyprinus carpio (Common carp) protein is Gonadotropin subunit beta-1 (cgba).